The primary structure comprises 122 residues: Large ribosomal subunit protein uL14 (122 aa).

This sequence belongs to the universal ribosomal protein uL14 family. Part of the 50S ribosomal subunit. Forms a cluster with proteins L3 and L19. In the 70S ribosome, L14 and L19 interact and together make contacts with the 16S rRNA in bridges B5 and B8.

In terms of biological role, binds to 23S rRNA. Forms part of two intersubunit bridges in the 70S ribosome. In Alkaliphilus oremlandii (strain OhILAs) (Clostridium oremlandii (strain OhILAs)), this protein is Large ribosomal subunit protein uL14.